We begin with the raw amino-acid sequence, 240 residues long: MILLISDLHLQEERPDISRAFLDLLDGRARHAKALYILGDFFEAWIGDDAMTPFQQSICQAMRRLSDSGTAIYLMHGNRDFLIGQAFCDAAGCTLLSDPSVIELGGEQVLLMHGDTLCTRDLGYMKMRRLLRNPLSLWILRHLPLSARYKLARKLRSESRTQVRMKSTEIVDVTPEEVPKVMAAHGVRTLVHGHTHRPAIHKLVVDGQPARRIVLGDWDRRGWALQVDEQGFQLAPFEFS.

Mn(2+)-binding residues include aspartate 7, histidine 9, aspartate 40, asparagine 78, and histidine 113. 78-79 is a binding site for substrate; it reads NR. The substrate site is built by aspartate 121, serine 159, lysine 166, and histidine 194. Mn(2+) is bound by residues histidine 194 and histidine 196.

This sequence belongs to the LpxH family. Requires Mn(2+) as cofactor.

Its subcellular location is the cell inner membrane. The catalysed reaction is UDP-2-N,3-O-bis[(3R)-3-hydroxytetradecanoyl]-alpha-D-glucosamine + H2O = 2-N,3-O-bis[(3R)-3-hydroxytetradecanoyl]-alpha-D-glucosaminyl 1-phosphate + UMP + 2 H(+). It functions in the pathway glycolipid biosynthesis; lipid IV(A) biosynthesis; lipid IV(A) from (3R)-3-hydroxytetradecanoyl-[acyl-carrier-protein] and UDP-N-acetyl-alpha-D-glucosamine: step 4/6. In terms of biological role, hydrolyzes the pyrophosphate bond of UDP-2,3-diacylglucosamine to yield 2,3-diacylglucosamine 1-phosphate (lipid X) and UMP by catalyzing the attack of water at the alpha-P atom. Involved in the biosynthesis of lipid A, a phosphorylated glycolipid that anchors the lipopolysaccharide to the outer membrane of the cell. This chain is UDP-2,3-diacylglucosamine hydrolase, found in Pseudomonas putida (strain ATCC 700007 / DSM 6899 / JCM 31910 / BCRC 17059 / LMG 24140 / F1).